The chain runs to 223 residues: Cytochrome c biogenesis ATP-binding export protein CcmA (223 aa).

Positions 20–222 (LAAHALTYSR…PTRLLHLKKA (203 aa)) constitute an ABC transporter domain. An ATP-binding site is contributed by 52-59 (GPNGIGKT).

The protein belongs to the ABC transporter superfamily. CcmA exporter (TC 3.A.1.107) family. As to quaternary structure, the complex is composed of two ATP-binding proteins (CcmA) and two transmembrane proteins (CcmB).

The protein localises to the cell inner membrane. The enzyme catalyses heme b(in) + ATP + H2O = heme b(out) + ADP + phosphate + H(+). Part of the ABC transporter complex CcmAB involved in the biogenesis of c-type cytochromes; once thought to export heme, this seems not to be the case, but its exact role is uncertain. Responsible for energy coupling to the transport system. The protein is Cytochrome c biogenesis ATP-binding export protein CcmA of Xylella fastidiosa (strain 9a5c).